The following is a 249-amino-acid chain: Dihydroneopterin 2',3'-cyclic phosphate phosphodiesterase (249 aa).

An HD domain is found at 58–172 (LIEHTISVTK…VHYADEADSK (115 aa)).

As to quaternary structure, homododecamer. The cofactor is Fe(2+). It depends on Zn(2+) as a cofactor.

It catalyses the reaction 7,8-dihydroneopterin 2',3'-cyclic phosphate + H2O = 7,8-dihydroneopterin 3'-phosphate + H(+). It carries out the reaction 7,8-dihydroneopterin 2',3'-cyclic phosphate + H2O = 7,8-dihydroneopterin 2'-phosphate + H(+). Its pathway is cofactor biosynthesis; 5,6,7,8-tetrahydromethanopterin biosynthesis. In terms of biological role, cyclic phosphodiesterase that hydrolyzes the cyclic phosphate of 7,8-dihydroneopterin 2',3'-cyclic phosphate (H2N-cP) and converts it to a mixture of 7,8-dihydroneopterin 2'-phosphate (H2N-2'P) and 7,8-dihydroneopterin 3'-phosphate (H2N-3'P). Is also able to utilize other phosphodiesters as substrates in vitro: hydrolysis of bis-pNPP and pNPPC produces nitrophenyl phosphate, and that of 2',3'-cAMP produces 3'-AMP. ATP, 3',5'-cAMP, GTP, 3',5'-cGMP, and 4',5'-cFMN cannot serve as substrates. This Methanocaldococcus jannaschii (strain ATCC 43067 / DSM 2661 / JAL-1 / JCM 10045 / NBRC 100440) (Methanococcus jannaschii) protein is Dihydroneopterin 2',3'-cyclic phosphate phosphodiesterase (mptB).